The primary structure comprises 427 residues: Glutamate-1-semialdehyde 2,1-aminomutase (427 aa).

Lysine 265 is modified (N6-(pyridoxal phosphate)lysine).

It belongs to the class-III pyridoxal-phosphate-dependent aminotransferase family. HemL subfamily. As to quaternary structure, homodimer. It depends on pyridoxal 5'-phosphate as a cofactor.

It is found in the cytoplasm. It catalyses the reaction (S)-4-amino-5-oxopentanoate = 5-aminolevulinate. The protein operates within porphyrin-containing compound metabolism; protoporphyrin-IX biosynthesis; 5-aminolevulinate from L-glutamyl-tRNA(Glu): step 2/2. In Burkholderia cenocepacia (strain ATCC BAA-245 / DSM 16553 / LMG 16656 / NCTC 13227 / J2315 / CF5610) (Burkholderia cepacia (strain J2315)), this protein is Glutamate-1-semialdehyde 2,1-aminomutase.